The primary structure comprises 1012 residues: DNA polymerase catalytic subunit (1012 aa).

This sequence belongs to the DNA polymerase type-B family.

Its subcellular location is the host nucleus. The catalysed reaction is DNA(n) + a 2'-deoxyribonucleoside 5'-triphosphate = DNA(n+1) + diphosphate. The protein is DNA polymerase catalytic subunit (U38) of Homo sapiens (Human).